Reading from the N-terminus, the 614-residue chain is V-type proton ATPase catalytic subunit A (614 aa).

247–254 (GAFGCGKT) serves as a coordination point for ATP.

The protein belongs to the ATPase alpha/beta chains family. As to quaternary structure, V-ATPase is a heteromultimeric enzyme made up of two complexes: the ATP-hydrolytic V1 complex and the proton translocation V0 complex. The V1 complex consists of three catalytic AB heterodimers that form a heterohexamer, three peripheral stalks each consisting of EG heterodimers, one central rotor including subunits D and F, and the regulatory subunits C and H. The proton translocation complex V0 consists of the proton transport subunit a, a ring of proteolipid subunits c9c'', rotary subunit d, subunits e and f, and the accessory subunits VhaAC45 and ATP6AP2.

The catalysed reaction is ATP + H2O + 4 H(+)(in) = ADP + phosphate + 5 H(+)(out). ATP hydrolysis occurs at the interface between the nucleotide-binding domains of subunits A and B. ATP hydrolysis triggers a conformational change in the subunits D and F, which induces a shift of subunit d. The c-ring is subsequently rotated and results in a continuous proton translocation across the membrane. Functionally, catalytic subunit of the V1 complex of vacuolar(H+)-ATPase (V-ATPase), a multisubunit enzyme composed of a peripheral complex (V1) that hydrolyzes ATP and a membrane integral complex (V0) that translocates protons. V-ATPase is responsible for acidifying and maintaining the pH of intracellular compartments and in some cell types, is targeted to the plasma membrane, where it is responsible for acidifying the extracellular environment. The polypeptide is V-type proton ATPase catalytic subunit A (Anopheles gambiae (African malaria mosquito)).